The chain runs to 339 residues: Senescence-specific cysteine protease SAG39 (339 aa).

Positions 1–23 (MAMAKALLFAILGCLCLCSAVLA) are cleaved as a signal peptide. 3 disulfides stabilise this stretch: C144–C187, C178–C220, and C276–C328. C147 is an active-site residue. Active-site residues include H282 and N303.

This sequence belongs to the peptidase C1 family. Low expression in mature leaves.

It localises to the vacuole. Cysteine protease that may have a developmental senescence specific cell death function during apoptosis, heavy metal detoxification, and hypersensitive response. In Oryza sativa subsp. japonica (Rice), this protein is Senescence-specific cysteine protease SAG39.